Here is a 161-residue protein sequence, read N- to C-terminus: Cyclic pyranopterin monophosphate synthase (161 aa).

Residues 75-77 (LCH) and 113-114 (ME) each bind substrate. Residue aspartate 128 is part of the active site.

This sequence belongs to the MoaC family. As to quaternary structure, homohexamer; trimer of dimers.

It carries out the reaction (8S)-3',8-cyclo-7,8-dihydroguanosine 5'-triphosphate = cyclic pyranopterin phosphate + diphosphate. It participates in cofactor biosynthesis; molybdopterin biosynthesis. Its function is as follows. Catalyzes the conversion of (8S)-3',8-cyclo-7,8-dihydroguanosine 5'-triphosphate to cyclic pyranopterin monophosphate (cPMP). This Escherichia coli O9:H4 (strain HS) protein is Cyclic pyranopterin monophosphate synthase.